Consider the following 105-residue polypeptide: Protein FAM24A (105 aa).

The N-terminal stretch at Met-1–Cys-32 is a signal peptide.

The protein belongs to the FAM24 family.

The protein localises to the secreted. This chain is Protein FAM24A (FAM24A), found in Homo sapiens (Human).